The following is a 274-amino-acid chain: Proliferating cell nuclear antigen 1 (274 aa).

Residues 61-80 (RCDRERVLGVNIASLNKVFK) mediate DNA binding.

This sequence belongs to the PCNA family. As to quaternary structure, homotrimer. Interacts with ORC1 (via PIP-box motif); the interaction occurs during DNA replication in trophozoites. Interacts with ORC5; the interaction occurs during the trophozoite stage but not at the late schizont stage. Interacts with FEN1.

It localises to the nucleus. Its subcellular location is the chromosome. The protein resides in the cytoplasm. Its function is as follows. Auxiliary protein of DNA polymerase delta and is involved in the control of DNA replication by increasing the polymerase processibility during elongation of the leading strand. Involved in DNA damage response. The protein is Proliferating cell nuclear antigen 1 of Plasmodium falciparum (isolate 3D7).